We begin with the raw amino-acid sequence, 157 residues long: MSEHTIAHSITLPPGYTLALIPPEPEAGWEMLEWRHSDLTTVAEPVTFGSAPTPSPSMVEETNGVGPEGKFLPLTISPLLHKTSRKALTPTPSLSPLTSLACPNSGIGPRERSTSTPIPSAGTSSTLTQRVLQSLRAPSASTRRSLTASSSSPSTQR.

Disordered stretches follow at residues 46-70 (VTFG…PEGK) and 83-157 (TSRK…STQR). A compositionally biased stretch (low complexity) spans 88–100 (LTPTPSLSPLTSL). Over residues 114–132 (TSTPIPSAGTSSTLTQRVL) the composition is skewed to polar residues. The segment covering 134–157 (SLRAPSASTRRSLTASSSSPSTQR) has biased composition (low complexity).

The protein is Protein p17 (p17) of Helicoverpa armigera (Cotton bollworm).